The sequence spans 569 residues: Pyrophosphate--fructose 6-phosphate 1-phosphotransferase subunit beta (569 aa).

Gly-107 contacts diphosphate. Asp-201 is a Mg(2+) binding site. Substrate contacts are provided by residues 229–231 (TID), 268–269 (KY), 276–278 (MGR), Glu-337, and 442–445 (YEGR). Catalysis depends on Asp-231, which acts as the Proton acceptor.

This sequence belongs to the phosphofructokinase type A (PFKA) family. PPi-dependent PFK group II subfamily. Clade 'Long' sub-subfamily. As to quaternary structure, tetramer of two alpha (regulatory) and two beta (catalytic) chains. Requires Mg(2+) as cofactor.

It localises to the cytoplasm. It carries out the reaction beta-D-fructose 6-phosphate + diphosphate = beta-D-fructose 1,6-bisphosphate + phosphate + H(+). It participates in carbohydrate degradation; glycolysis; D-glyceraldehyde 3-phosphate and glycerone phosphate from D-glucose: step 3/4. Allosterically activated by fructose 2,6-bisphosphate. Its function is as follows. Catalytic subunit of pyrophosphate--fructose 6-phosphate 1-phosphotransferase. Catalyzes the phosphorylation of D-fructose 6-phosphate, the first committing step of glycolysis. Uses inorganic phosphate (PPi) as phosphoryl donor instead of ATP like common ATP-dependent phosphofructokinases (ATP-PFKs), which renders the reaction reversible, and can thus function both in glycolysis and gluconeogenesis. This chain is Pyrophosphate--fructose 6-phosphate 1-phosphotransferase subunit beta, found in Solanum tuberosum (Potato).